Consider the following 432-residue polypeptide: 3-phosphoshikimate 1-carboxyvinyltransferase (432 aa).

The 3-phosphoshikimate site is built by Lys22, Ser23, and Arg27. Phosphoenolpyruvate is bound at residue Lys22. Residues Gly96 and Arg127 each contribute to the phosphoenolpyruvate site. Residues Ser173, Ser174, Gln175, Ser201, Asp316, Asn339, and Lys343 each contribute to the 3-phosphoshikimate site. Gln175 contributes to the phosphoenolpyruvate binding site. The active-site Proton acceptor is Asp316. Arg347, Arg391, and Lys416 together coordinate phosphoenolpyruvate.

The protein belongs to the EPSP synthase family. Monomer.

It localises to the cytoplasm. It catalyses the reaction 3-phosphoshikimate + phosphoenolpyruvate = 5-O-(1-carboxyvinyl)-3-phosphoshikimate + phosphate. It functions in the pathway metabolic intermediate biosynthesis; chorismate biosynthesis; chorismate from D-erythrose 4-phosphate and phosphoenolpyruvate: step 6/7. Its function is as follows. Catalyzes the transfer of the enolpyruvyl moiety of phosphoenolpyruvate (PEP) to the 5-hydroxyl of shikimate-3-phosphate (S3P) to produce enolpyruvyl shikimate-3-phosphate and inorganic phosphate. The protein is 3-phosphoshikimate 1-carboxyvinyltransferase of Histophilus somni (Haemophilus somnus).